A 197-amino-acid chain; its full sequence is Holliday junction branch migration complex subunit RuvA (197 aa).

Residues 1–63 (MISSLRGEVL…EDSMTLYGFV (63 aa)) form a domain I region. The interval 64 to 139 (DGETRDLFLT…KVGPAGSAAT (76 aa)) is domain II. The tract at residues 139–143 (TAPAV) is flexible linker. The segment at 144–197 (NGHTVRAPVVEALVGLGFAAKQAEEATDKVLAGDGEATTSSALRAALSLLGKAR) is domain III.

This sequence belongs to the RuvA family. As to quaternary structure, homotetramer. Forms an RuvA(8)-RuvB(12)-Holliday junction (HJ) complex. HJ DNA is sandwiched between 2 RuvA tetramers; dsDNA enters through RuvA and exits via RuvB. An RuvB hexamer assembles on each DNA strand where it exits the tetramer. Each RuvB hexamer is contacted by two RuvA subunits (via domain III) on 2 adjacent RuvB subunits; this complex drives branch migration. In the full resolvosome a probable DNA-RuvA(4)-RuvB(12)-RuvC(2) complex forms which resolves the HJ.

Its subcellular location is the cytoplasm. In terms of biological role, the RuvA-RuvB-RuvC complex processes Holliday junction (HJ) DNA during genetic recombination and DNA repair, while the RuvA-RuvB complex plays an important role in the rescue of blocked DNA replication forks via replication fork reversal (RFR). RuvA specifically binds to HJ cruciform DNA, conferring on it an open structure. The RuvB hexamer acts as an ATP-dependent pump, pulling dsDNA into and through the RuvAB complex. HJ branch migration allows RuvC to scan DNA until it finds its consensus sequence, where it cleaves and resolves the cruciform DNA. In Mycobacterium marinum (strain ATCC BAA-535 / M), this protein is Holliday junction branch migration complex subunit RuvA.